The sequence spans 440 residues: Microtubule-associated tumor suppressor 1 homolog A (440 aa).

The tract at residues 44 to 67 (KSRTNSKNPQPPTNGQPDLVPPES) is disordered. Positions 69 to 401 (SRNVEYYKAQ…RLSMENEELL (333 aa)) form a coiled coil. The interval 407 to 440 (GDLNSPRKISPSPSLNLQSPRTSGMFSSPPVSPR) is disordered. Residues 417-432 (PSPSLNLQSPRTSGMF) are compositionally biased toward polar residues.

It belongs to the MTUS1 family. Homodimer.

Its subcellular location is the mitochondrion. It is found in the golgi apparatus. The protein localises to the cell membrane. The protein resides in the nucleus. May inhibit cell proliferation. The sequence is that of Microtubule-associated tumor suppressor 1 homolog A (mtus1a) from Danio rerio (Zebrafish).